The chain runs to 55 residues: Ovomucoid (55 aa).

Residues 5-55 (VDCSEHPKPACTLDYRPICGSDSKTYSNKCDFCNAVMDSNGTLTLSHFGKC) enclose the Kazal-like domain. Intrachain disulfides connect C7–C37, C15–C34, and C23–C55. Residue N44 is glycosylated (N-linked (GlcNAc...) asparagine).

It is found in the secreted. This Dacelo novaeguineae (Laughing kookaburra) protein is Ovomucoid.